A 367-amino-acid chain; its full sequence is Queuine tRNA-ribosyltransferase (367 aa).

Residue Asp92 is the Proton acceptor of the active site. Residues Asp92–Phe96, Asp146, Gln188, and Gly215 each bind substrate. The interval Gly246–Asp252 is RNA binding. The Nucleophile role is filled by Asp265. Positions 303, 305, 308, and 334 each coordinate Zn(2+).

The protein belongs to the queuine tRNA-ribosyltransferase family. In terms of assembly, homodimer. Within each dimer, one monomer is responsible for RNA recognition and catalysis, while the other monomer binds to the replacement base PreQ1. Zn(2+) is required as a cofactor.

It carries out the reaction 7-aminomethyl-7-carbaguanine + guanosine(34) in tRNA = 7-aminomethyl-7-carbaguanosine(34) in tRNA + guanine. It participates in tRNA modification; tRNA-queuosine biosynthesis. Its function is as follows. Catalyzes the base-exchange of a guanine (G) residue with the queuine precursor 7-aminomethyl-7-deazaguanine (PreQ1) at position 34 (anticodon wobble position) in tRNAs with GU(N) anticodons (tRNA-Asp, -Asn, -His and -Tyr). Catalysis occurs through a double-displacement mechanism. The nucleophile active site attacks the C1' of nucleotide 34 to detach the guanine base from the RNA, forming a covalent enzyme-RNA intermediate. The proton acceptor active site deprotonates the incoming PreQ1, allowing a nucleophilic attack on the C1' of the ribose to form the product. After dissociation, two additional enzymatic reactions on the tRNA convert PreQ1 to queuine (Q), resulting in the hypermodified nucleoside queuosine (7-(((4,5-cis-dihydroxy-2-cyclopenten-1-yl)amino)methyl)-7-deazaguanosine). The chain is Queuine tRNA-ribosyltransferase from Francisella tularensis subsp. novicida (strain U112).